Here is a 1072-residue protein sequence, read N- to C-terminus: Neurofilament heavy polypeptide (1072 aa).

Ser-74 is subject to Phosphoserine. The IF rod domain occupies 94-409; that stretch reads EKEQLQALND…KLLEGEECRI (316 aa). 3 coiled-coil regions span residues 98 to 132, 174 to 222, and 293 to 380; these read LQALNDRFAGYIDKVRQLEAHNRTLEGEAAALRQQ, IAHV…LQEE, and LDRL…QLRE. Residues 278-643 are 55 X 6 AA approximate tandem repeats of K-S-P-[VAGSE]-[KEVTSGA]-[EAVK]; that stretch reads TVQSTLQSEE…AKSPAEAKSP (366 aa). Phosphoserine is present on residues Ser-343, Ser-414, and Ser-417. Residues 454 to 1072 form a disordered region; that stretch reads EEQTEEIQVT…PEDKAAKGDK (619 aa). Residues 455–487 are compositionally biased toward acidic residues; the sequence is EQTEEIQVTEEVTEEEDKEAQGEEEEEAEEGGE. Over residues 488–499 the composition is skewed to low complexity; it reads EAATTSPPAEEA. Residue Ser-501 is modified to Phosphoserine. The segment covering 501-584 has biased composition (basic and acidic residues); it reads SPEKETKSPV…KSPAEAKSPA (84 aa). 36 tandem repeats follow at residues 507 to 512, 515 to 520, 521 to 526, 527 to 532, 533 to 538, 539 to 544, 545 to 550, 551 to 556, 557 to 562, 563 to 568, 569 to 574, 575 to 580, 581 to 586, 587 to 592, 593 to 598, 599 to 604, 605 to 610, 611 to 616, 617 to 622, 623 to 628, 629 to 634, 635 to 640, 641 to 646, 647 to 652, 653 to 658, 659 to 664, 665 to 670, 671 to 676, 677 to 682, 683 to 688, 689 to 694, 695 to 700, 701 to 706, 707 to 712, 713 to 718, and 719 to 724. Phosphoserine is present on residues Ser-516, Ser-522, Ser-528, Ser-534, Ser-540, Ser-546, Ser-552, Ser-558, Ser-564, Ser-570, Ser-576, Ser-582, Ser-588, Ser-594, Ser-600, Ser-606, Ser-612, Ser-618, Ser-624, Ser-627, Ser-630, Ser-636, Ser-642, Ser-648, Ser-654, Ser-660, Ser-666, Ser-672, Ser-678, Ser-684, Ser-687, Ser-690, Ser-696, Ser-702, Ser-708, Ser-714, and Ser-720. Over residues 600–620 the composition is skewed to basic and acidic residues; it reads SPAEAKSPAEVKSPVEAKSPA. Positions 621–631 are enriched in low complexity; it reads EAKSPASVKSP. Over residues 720–774 the composition is skewed to basic and acidic residues; sequence SPAEAKPPAEAKSPAEAKSPAEAKSPAEAKSPAEAKSPVEVKSPEKAKSPVKEGA. Residues 725 to 730 form a 37; approximate repeat; sequence KPPAEA. 7 consecutive repeat copies span residues 731–736, 737–742, 743–748, 749–754, 755–760, 761–766, and 767–772. Phosphoserine occurs at positions 732, 738, 744, 750, 756, and 762. One copy of the 45; approximate repeat lies at 775 to 780; that stretch reads KSLAEA. Phosphoserine occurs at positions 776, 782, and 788. 2 tandem repeats follow at residues 781-786 and 787-792. 2 stretches are compositionally biased toward basic and acidic residues: residues 781–953 and 963–1072; these read KSPE…KAAA and GVKE…KGDK. The stretch at 795-800 is one 48; approximate repeat; it reads KPPAEV. 4 repeat units span residues 801 to 806, 807 to 812, 815 to 820, and 826 to 831. Residues Ser-802, Ser-808, Ser-816, and Ser-827 each carry the phosphoserine modification. Thr-832 carries the post-translational modification Phosphothreonine. Residues Ser-846, Ser-852, Ser-860, Ser-880, and Ser-937 each carry the phosphoserine modification. A run of 3 repeats spans residues 851-856, 859-864, and 879-884.

This sequence belongs to the intermediate filament family. As to quaternary structure, forms heterodimers with NEFL; which can further hetero-oligomerize (in vitro). Forms heterodimers with INA (in vitro). There are a number of repeats of the tripeptide K-S-P, NFH is phosphorylated on a number of the serines in this motif. It is thought that phosphorylation of NFH results in the formation of interfilament cross bridges that are important in the maintenance of axonal caliber. Post-translationally, phosphorylation seems to play a major role in the functioning of the larger neurofilament polypeptides (NF-M and NF-H), the levels of phosphorylation being altered developmentally and coincidentally with a change in the neurofilament function. In terms of processing, phosphorylated in the head and rod regions by the PKC kinase PKN1, leading to the inhibition of polymerization. As to expression, expressed in the dorsal root ganglion neurons (at protein level). Expressed in cutaneous and muscular sensory neurons.

The protein resides in the cytoplasm. It localises to the cytoskeleton. The protein localises to the cell projection. Its subcellular location is the axon. Neurofilaments usually contain three intermediate filament proteins: NEFL, NEFM, and NEFH which are involved in the maintenance of neuronal caliber. NEFH has an important function in mature axons that is not subserved by the two smaller NEF proteins. May additionally cooperate with the neuronal intermediate filament proteins PRPH and INA to form neuronal filamentous networks. The protein is Neurofilament heavy polypeptide (Nefh) of Rattus norvegicus (Rat).